The sequence spans 146 residues: Hemoglobin subunit beta-2 (146 aa).

Position 1 is an N-acetylvaline (Val1). Positions 2–146 constitute a Globin domain; it reads HLHGDEKAAV…VASALAHKYH (145 aa). Position 17 is an N6-succinyllysine (Lys17). The residue at position 44 (Ser44) is a Phosphoserine. Lys59 is modified (N6-succinyllysine). Positions 63 and 92 each coordinate heme b. Arg104 carries the asymmetric dimethylarginine modification. The residue at position 123 (Thr123) is a Phosphothreonine.

It belongs to the globin family. Heterotetramer of two alpha chains and two beta chains. Red blood cells.

Functionally, involved in oxygen transport from the lung to the various peripheral tissues. This is Hemoglobin subunit beta-2 (HBB2) from Tapirus terrestris (Lowland tapir).